The following is a 401-amino-acid chain: Type I restriction enzyme EcoprrI specificity subunit (401 aa).

The protein belongs to the type-I restriction system S methylase family. As to quaternary structure, the type I restriction/modification system is composed of three polypeptides R, M and S; the restriction enzyme has stoichiometry R(2)M(2)S(1) while the methyltransferase is M(2)S(1).

The specificity (S) subunit of a type I restriction enzyme; this subunit dictates DNA sequence specificity. The M and S subunits together form a methyltransferase (MTase) that methylates two adenine residues of the sequence 5'-CCAN(7)ATGC-3'. In the presence of the R subunit the complex can also act as an endonuclease, binding to the same target sequence but cutting the DNA some distance from this site. Whether the DNA is cut or modified depends on the methylation state of the target sequence. When the target site is unmodified, the DNA is cut. When the target site is hemimethylated, the complex acts as a maintenance MTase modifying the DNA so that both strands become methylated. After locating a non-methylated recognition site, the enzyme complex serves as a molecular motor that translocates DNA in an ATP-dependent manner until a collision occurs that triggers cleavage. In Escherichia coli, this protein is Type I restriction enzyme EcoprrI specificity subunit (prrB).